The sequence spans 196 residues: ATP-dependent Clp protease proteolytic subunit (196 aa).

Catalysis depends on S101, which acts as the Nucleophile. H126 is an active-site residue.

It belongs to the peptidase S14 family. Component of the chloroplastic Clp protease core complex.

It is found in the plastid. Its subcellular location is the chloroplast stroma. The enzyme catalyses Hydrolysis of proteins to small peptides in the presence of ATP and magnesium. alpha-casein is the usual test substrate. In the absence of ATP, only oligopeptides shorter than five residues are hydrolyzed (such as succinyl-Leu-Tyr-|-NHMec, and Leu-Tyr-Leu-|-Tyr-Trp, in which cleavage of the -Tyr-|-Leu- and -Tyr-|-Trp bonds also occurs).. Its function is as follows. Cleaves peptides in various proteins in a process that requires ATP hydrolysis. Has a chymotrypsin-like activity. Plays a major role in the degradation of misfolded proteins. In Nicotiana tabacum (Common tobacco), this protein is ATP-dependent Clp protease proteolytic subunit.